Reading from the N-terminus, the 318-residue chain is NAD(P)H-dependent D-xylose reductase (318 aa).

Tyr48 acts as the Proton donor in catalysis. His110 provides a ligand contact to substrate. NAD(+) is bound by residues 165–166, 214–223, and 270–280; these read SN, SNFGPLSFLE, and KSTFPNTLAVN.

The protein belongs to the aldo/keto reductase family.

It catalyses the reaction xylitol + NAD(+) = D-xylose + NADH + H(+). The enzyme catalyses xylitol + NADP(+) = D-xylose + NADPH + H(+). Its pathway is carbohydrate metabolism; D-xylose degradation. Functionally, reduces D-xylose into xylitol. Has a preference for NADPH, but can also utilize NADH as cosubstrate. The sequence is that of NAD(P)H-dependent D-xylose reductase (XYL1) from Pachysolen tannophilus (Yeast).